Here is a 364-residue protein sequence, read N- to C-terminus: MDFFYIGVMSGSSLDGIDIALLKQDDRSRLVATHYIPMPEDLHAELLGLCSSGADEFARAAIAEQKWCKLVAQGVQTLLKEQNKVVADIRAIGSHGQTIRHEPARGYSIQIGNPALLAELTEITVVSDFRRRDIAAGGQGAPLVPAFHEALFDDNKDHRAVLNIGGFSNLSLIESDRPVEGFDCGPGNVLLDAWIQSQRHESYDKDGAWAASGKVDPELLKKLLSDPFFLTKGPKSTGREVFNLGWVHHHLFQLPTLAPEDVQATLLELTALTITESLQTAQAVTKELLVCGGGAHNKALMKRLAELLPDTEVNSTEKFGVDPDWVEAMAFAWLAHCCLEGVPANRPTVTGAKGRRVLGAIYPA.

Residue 11 to 18 (GSSLDGID) participates in ATP binding.

It belongs to the anhydro-N-acetylmuramic acid kinase family.

It catalyses the reaction 1,6-anhydro-N-acetyl-beta-muramate + ATP + H2O = N-acetyl-D-muramate 6-phosphate + ADP + H(+). It participates in amino-sugar metabolism; 1,6-anhydro-N-acetylmuramate degradation. Its pathway is cell wall biogenesis; peptidoglycan recycling. Functionally, catalyzes the specific phosphorylation of 1,6-anhydro-N-acetylmuramic acid (anhMurNAc) with the simultaneous cleavage of the 1,6-anhydro ring, generating MurNAc-6-P. Is required for the utilization of anhMurNAc either imported from the medium or derived from its own cell wall murein, and thus plays a role in cell wall recycling. This Pseudomonas syringae pv. tomato (strain ATCC BAA-871 / DC3000) protein is Anhydro-N-acetylmuramic acid kinase.